The following is a 444-amino-acid chain: Glutamate-1-semialdehyde 2,1-aminomutase (444 aa).

N6-(pyridoxal phosphate)lysine is present on K267.

Belongs to the class-III pyridoxal-phosphate-dependent aminotransferase family. HemL subfamily. In terms of assembly, homodimer. Pyridoxal 5'-phosphate serves as cofactor.

Its subcellular location is the cytoplasm. It catalyses the reaction (S)-4-amino-5-oxopentanoate = 5-aminolevulinate. Its pathway is porphyrin-containing compound metabolism; protoporphyrin-IX biosynthesis; 5-aminolevulinate from L-glutamyl-tRNA(Glu): step 2/2. The sequence is that of Glutamate-1-semialdehyde 2,1-aminomutase from Xylella fastidiosa (strain 9a5c).